Here is a 259-residue protein sequence, read N- to C-terminus: Adenylate kinase (259 aa).

Position 52-57 (52-57) interacts with ATP; that stretch reads GAGKGT. Positions 72–101 are NMP; it reads ATGDMLRSQVAKKTDLGREAKKIMDQGGLV. Residues T73, R78, 99–101, 128–131, and Q135 each bind AMP; these read GLV and GFPR. Residues 169 to 206 are LID; that stretch reads GRLVHPASGRSYHKIFNPPKEAMKDDITGEPLVQRSDD. ATP-binding positions include R170 and 179–180; that span reads SY. Residues R203 and R214 each coordinate AMP. Q242 contributes to the ATP binding site.

This sequence belongs to the adenylate kinase family. AK2 subfamily. In terms of assembly, monomer.

Its subcellular location is the cytoplasm. The protein resides in the mitochondrion intermembrane space. It catalyses the reaction AMP + ATP = 2 ADP. In terms of biological role, catalyzes the reversible transfer of the terminal phosphate group between ATP and AMP. Plays an important role in cellular energy homeostasis and in adenine nucleotide metabolism. Adenylate kinase activity is critical for regulation of the phosphate utilization and the AMP de novo biosynthesis pathways. In Emericella nidulans (strain FGSC A4 / ATCC 38163 / CBS 112.46 / NRRL 194 / M139) (Aspergillus nidulans), this protein is Adenylate kinase (adk1).